The chain runs to 221 residues: MTREEALLWLDQHIGISRETVEKLDAFVACLHAEMAHQNLIARSTVDDLWGRHIIDSAQLLPLARKEAAFNKKASPKSWLDLGSGAGFPGIIIAILSEMAVTLVESRRKRVEFLEKAAEAAGTPVTILGQRLENIEPQAFDIITARAFAPLDKLWRLAFPFSHNESLWLLPKGQNARTELEETRKLWQGDTRIEGSVTDPQSAIIVATHIHPKKQKTGKKT.

S-adenosyl-L-methionine contacts are provided by residues G83, F88, 132 to 133 (LE), and R146.

It belongs to the methyltransferase superfamily. RNA methyltransferase RsmG family.

It localises to the cytoplasm. The catalysed reaction is guanosine(527) in 16S rRNA + S-adenosyl-L-methionine = N(7)-methylguanosine(527) in 16S rRNA + S-adenosyl-L-homocysteine. In terms of biological role, specifically methylates the N7 position of guanine in position 527 of 16S rRNA. The polypeptide is Ribosomal RNA small subunit methyltransferase G (Zymomonas mobilis subsp. mobilis (strain ATCC 31821 / ZM4 / CP4)).